The following is a 332-amino-acid chain: Azadirone synthase LFS (332 aa).

One can recognise a Fe2OG dioxygenase domain in the interval 181–286; that stretch reads ANANYTNMFH…RYSTGTFICP (106 aa). Residues His208, Asp210, and His269 each contribute to the Fe cation site. Residue Arg277 participates in 2-oxoglutarate binding.

The protein belongs to the iron/ascorbate-dependent oxidoreductase family. The cofactor is Fe(2+). In terms of tissue distribution, mainly expressed in petioles and, to a lower extent, in roots.

The catalysed reaction is (1S,3bR,4R,5aR,9aR,9bR,11aS)-1-(1-hydroxy-4-oxobutan-2-yl)-3b,6,6,9a,11a-pentamethyl-7-oxo-1H,2H,3bH,4H,5H,5aH,6H,7H,9aH,9bH,10H,11H,11aH-cyclopenta[a]phenanthren-4-yl acetate + 2-oxoglutarate + O2 = azadirone + succinate + CO2 + 2 H2O. The protein operates within secondary metabolite biosynthesis; terpenoid biosynthesis. Functionally, 2-oxoglutarate-Fe(II) type oxidoreductase involved in the biosynthesis of limonoids triterpene natural products such as azadirachtin, an antifeedant widely used as bioinsecticide, and possessing many medicinal applications including anti-tumoral, anti-malarial, anti-rheumatic, antibacterial, anti-inflammatory, anti-pyretic and diuretic effects. Catalyzes the formation of azadirone. This chain is Azadirone synthase LFS, found in Melia azedarach (Chinaberry tree).